The following is a 184-amino-acid chain: Ribosome-recycling factor (184 aa).

It belongs to the RRF family.

The protein resides in the cytoplasm. In terms of biological role, responsible for the release of ribosomes from messenger RNA at the termination of protein biosynthesis. May increase the efficiency of translation by recycling ribosomes from one round of translation to another. In Desulfotalea psychrophila (strain LSv54 / DSM 12343), this protein is Ribosome-recycling factor.